The following is a 1013-amino-acid chain: Poly [ADP-ribose] polymerase 1 (1013 aa).

The residue at position 2 (Ala-2) is an N-acetylalanine. The segment at 9 to 93 adopts a PARP-type 1 zinc-finger fold; the sequence is YRVEYAKSGR…KVKKTAEAGG (85 aa). Residues Cys-21 and Cys-24 each contribute to the Zn(2+) site. Phosphoserine is present on Ser-41. The Zn(2+) site is built by His-53 and Cys-56. N6-acetyllysine is present on residues Lys-97 and Lys-105. A PARP-type 2 zinc finger spans residues 113-203; it reads FAAEYAKSNR…VLKKQLPGVK (91 aa). Zn(2+) is bound by residues Cys-125 and Cys-128. N6-acetyllysine is present on Lys-131. Residues His-159 and Cys-162 each contribute to the Zn(2+) site. Residues Ser-177, Ser-179, and Ser-185 each carry the phosphoserine modification. Lys-192 participates in a covalent cross-link: Glycyl lysine isopeptide (Lys-Gly) (interchain with G-Cter in SUMO2). Residues 198–233 are disordered; sequence QLPGVKSEGKRKGDEVDGADEVAKKKSKKGKDKDSK. Residue Lys-203 forms a Glycyl lysine isopeptide (Lys-Gly) (interchain with G-Cter in SUMO1); alternate linkage. Lys-203 participates in a covalent cross-link: Glycyl lysine isopeptide (Lys-Gly) (interchain with G-Cter in SUMO2); alternate. 2 short sequence motifs (nuclear localization signal) span residues 207 to 209 and 221 to 226; these read KRK and KKKSKK. A PADR1 zinc-binding domain is found at 225–359; sequence KKGKDKDSKL…VKKQDRIFPP (135 aa). Lys-249 is covalently cross-linked (Glycyl lysine isopeptide (Lys-Gly) (interchain with G-Cter in SUMO2)). Ser-274 and Ser-277 each carry phosphoserine. The interval 290–332 is zinc ribbon; the sequence is GALLPCKECSGQLVFKSDAYYCTGDVTAWTKCMVKTQTPSRKE. Residues Cys-295, Cys-298, Cys-311, and Cys-321 each contribute to the Zn(2+) site. The segment at 357–383 is disordered; it reads FPPETSAPAPPHLPPSVTSAPTAVNSS. The span at 372 to 383 shows a compositional bias: polar residues; the sequence is SVTSAPTAVNSS. An automodification domain region spans residues 373–523; the sequence is VTSAPTAVNS…GVNKSEKRMK (151 aa). The BRCT domain maps to 385 to 476; that stretch reads PADKPLSNMK…KSLQELLSAH (92 aa). Asp-387 carries the polyADP-ribosyl aspartic acid modification. PolyADP-ribosyl glutamic acid is present on residues Glu-407, Glu-413, Glu-435, Glu-437, Glu-444, Glu-445, and Glu-456. Residue Lys-467 forms a Glycyl lysine isopeptide (Lys-Gly) (interchain with G-Cter in SUMO2) linkage. 2 positions are modified to polyADP-ribosyl glutamic acid: Glu-471 and Glu-484. Lys-486 participates in a covalent cross-link: Glycyl lysine isopeptide (Lys-Gly) (interchain with G-Cter in SUMO1); alternate. Lys-486 participates in a covalent cross-link: Glycyl lysine isopeptide (Lys-Gly) (interchain with G-Cter in SUMO2); alternate. Residues Glu-488 and Glu-491 each carry the polyADP-ribosyl glutamic acid modification. Residues 495–516 are disordered; it reads PKGKSAAPSKKSKGLYKEEGVN. An ADP-ribosylserine mark is found at Ser-499, Ser-503, and Ser-506. Lys-511 is covalently cross-linked (Glycyl lysine isopeptide (Lys-Gly) (interchain with G-Cter in SUMO2)). A polyADP-ribosyl glutamic acid mark is found at Glu-512 and Glu-513. Ser-518 is subject to ADP-ribosylserine. PolyADP-ribosyl glutamic acid is present on Glu-519. The residue at position 520 (Lys-520) is an N6-(ADP-ribosyl)lysine. Residue Lys-527 forms a Glycyl lysine isopeptide (Lys-Gly) (interchain with G-Cter in SUMO2) linkage. The 97-residue stretch at 541-637 folds into the WGR domain; it reads SAHVLEKGGK…KNFTKYPKKF (97 aa). Thr-593 is modified (phosphothreonine). Lys-599 and Lys-620 each carry N6-acetyllysine. Residues 661–778 form the PARP alpha-helical domain; it reads KSKLPKAVQE…DIEVAYSLLR (118 aa). Lys-747 is covalently cross-linked (Glycyl lysine isopeptide (Lys-Gly) (interchain with G-Cter in SUMO1); alternate). Residue Lys-747 forms a Glycyl lysine isopeptide (Lys-Gly) (interchain with G-Cter in SUMO2); alternate linkage. 2 positions are modified to phosphoserine: Ser-781 and Ser-785. Residues 787 to 1013 enclose the PARP catalytic domain; the sequence is DPIDVNYEKL…LKFNFKTSLW (227 aa). Residues 861-863, Gly-870, Arg-877, and Ser-903 each bind NAD(+); that span reads HGS. Residue Glu-987 is the For poly [ADP-ribose] polymerase activity of the active site.

It belongs to the ARTD/PARP family. In terms of assembly, homodimer; PARP-type zinc-fingers from separate PARP1 molecules form a dimer module that specifically recognizes DNA strand breaks. Heterodimer; heterodimerizes with PARP2. Interacts (via the PARP catalytic domain) with HPF1. Interacts with NMNAT1. Interacts with nucleosomes; with a preference for nucleosomes containing H2A.X. Interacts with APTX. Component of a base excision repair (BER) complex, containing at least XRCC1, PARP1, PARP2, POLB and LRIG3. Interacts with SRY. The SWAP complex consists of NPM1, NCL, PARP1 and SWAP70. Interacts with TIAM2. Interacts with PARP3; leading to activate PARP1 in absence of DNA. Interacts (when poly-ADP-ribosylated) with CHD1L (via macro domain). Interacts with the DNA polymerase alpha catalytic subunit POLA1; this interaction functions as part of the control of replication fork progression. Interacts with EEF1A1 and TXK. Interacts with RNF4. Interacts with RNF146. Interacts with ZNF423. Interacts with APLF. Interacts with SNAI1 (via zinc fingers); the interaction requires SNAI1 to be poly-ADP-ribosylated and non-phosphorylated (active) by GSK3B. Interacts (when poly-ADP-ribosylated) with PARP9. Interacts with NR4A3; activates PARP1 by improving acetylation of PARP1 and suppressing the interaction between PARP1 and SIRT1. Interacts (via catalytic domain) with PUM3; the interaction inhibits the poly-ADP-ribosylation activity of PARP1 and the degradation of PARP1 by CASP3 following genotoxic stress. Interacts with ZNF365. Interacts with RRP1B. Interacts with TIMELESS; the interaction is direct. Interacts with CGAS; leading to impede the formation of the PARP1-TIMELESS complex. Interacts with KHDC3L, the interaction is increased following the formation of DNA double-strand breaks. Interacts (when auto-poly-ADP-ribosylated) with XRCC1; leading to inhibit PARP1 ADP-ribosyltransferase activity. Interacts with SPINDOC; promoting PARP1 ADP-ribosyltransferase activity. Interacts with BANF1; leading to inhibit PARP1 ADP-ribosyltransferase activity in response to oxidative DNA damage. Interacts (when sumoylated and ubiquitinated) with VCP/p97; leading to its extraction from chromatin. Interacts with YARS1; promoting PARP1 ADP-ribosyltransferase activity. Interacts with PACMP micropeptide; Interacts with PACMP micropeptide; interaction. Interacts (when poly-ADP-ribosylated) with isoform 1 of MACROH2A1; MACROH2A1 specifically binds to poly-ADP-ribose chains and inhibits PARP1 activity, limiting the consumption of nuclear NAD(+). Interacts with CARM1; promoting recruitment to replication forks. Interacts with RECQL. Interacts with ZNF32; the interaction reshapes ZNF432 interacting proteins. Interacts with TPRN; TPRN interacts with a number of DNA damage response proteins, is recruited to sites of DNA damage and may play a role in DNA damage repair. As to quaternary structure, interacts (when auto-poly-ADP-ribosylated) with AIFM1. In terms of processing, poly-ADP-ribosylated on serine, glutamate and aspartate residues by autocatalysis. Auto-ADP-ribosylation on serine takes place following interaction with HPF1. Auto poly-ADP-ribosylation on serine residues promotes its dissociation from chromatin. Poly-ADP-ribosylated by PARP2; poly-ADP-ribosylation mediates the recruitment of CHD1L to DNA damage sites. Mono-ADP-ribosylated at Lys-520 by SIRT6 in response to oxidative stress, promoting recruitment to double-strand breaks (DSBs) sites. S-nitrosylated, leading to inhibit transcription regulation activity. Post-translationally, phosphorylated at Thr-593 by PRKDC in response to DNA damage following virus infection, promoting its translocation to the cytosol. Phosphorylated by TXK. In terms of processing, proteolytically cleaved by caspase-3 (CASP3) and caspase-7 (CASP7) in response to apoptosis to generate the Poly [ADP-ribose] polymerase 1, processed N-terminus and Poly [ADP-ribose] polymerase 1, processed C-terminus forms. Sumoylated with SUMO1 or SUMO2 by PIAS4 following prolonged residence (trapping) to chromatin. Sumoylation promotes ubiquitination by RNF4 and removal from chromatin by VCP/p97. Post-translationally, ubiquitinated by RNF4 following sumoylation by PIAS4 in response to prolonged residence (trapping) to chromatin. Ubiquitination promotes removal from chromatin by VCP/p97.

Its subcellular location is the chromosome. The protein resides in the nucleus. It localises to the nucleolus. The protein localises to the cytoplasm. It is found in the cytosol. The catalysed reaction is NAD(+) + (ADP-D-ribosyl)n-acceptor = nicotinamide + (ADP-D-ribosyl)n+1-acceptor + H(+).. It catalyses the reaction L-seryl-[protein] + NAD(+) = O-(ADP-D-ribosyl)-L-seryl-[protein] + nicotinamide + H(+). It carries out the reaction L-aspartyl-[protein] + NAD(+) = 4-O-(ADP-D-ribosyl)-L-aspartyl-[protein] + nicotinamide. The enzyme catalyses L-glutamyl-[protein] + NAD(+) = 5-O-(ADP-D-ribosyl)-L-glutamyl-[protein] + nicotinamide. The catalysed reaction is L-tyrosyl-[protein] + NAD(+) = O-(ADP-D-ribosyl)-L-tyrosyl-[protein] + nicotinamide + H(+). It catalyses the reaction L-histidyl-[protein] + NAD(+) = N(tele)-(ADP-D-ribosyl)-L-histidyl-[protein] + nicotinamide + H(+). Its activity is regulated as follows. ADP-ribosyltransferase activity is regulated via an allosteric activation mechanism. In absence of activation signal, PARP1 is autoinhibited by the PARP alpha-helical domain (also named HD region), which prevents effective NAD(+)-binding. Activity is highly stimulated by signals, such as DNA strand breaks. Binding to damaged DNA unfolds the PARP alpha-helical domain, relieving autoinhibition. Poly-ADP-ribosyltransferase activity is tightly regulated and PARP1 is removed from damaged chromatin following initial poly-ADP-ribosylation of chromatin to avoid prolonged residence (trapping) that has cytotoxic consequences. A number of factors (VCP/p97) or post-translational modifications (auto-poly-ADP-ribosylation or ubiquitination) promote PARP1 removal from chromatin. Functionally, poly-ADP-ribosyltransferase that mediates poly-ADP-ribosylation of proteins and plays a key role in DNA repair. Mediates glutamate, aspartate, serine, histidine or tyrosine ADP-ribosylation of proteins: the ADP-D-ribosyl group of NAD(+) is transferred to the acceptor carboxyl group of target residues and further ADP-ribosyl groups are transferred to the 2'-position of the terminal adenosine moiety, building up a polymer with an average chain length of 20-30 units. Serine ADP-ribosylation of proteins constitutes the primary form of ADP-ribosylation of proteins in response to DNA damage. Specificity for the different amino acids is conferred by interacting factors, such as HPF1 and NMNAT1. Following interaction with HPF1, catalyzes serine ADP-ribosylation of target proteins; HPF1 confers serine specificity by completing the PARP1 active site. Also catalyzes tyrosine ADP-ribosylation of target proteins following interaction with HPF1. Following interaction with NMNAT1, catalyzes glutamate and aspartate ADP-ribosylation of target proteins; NMNAT1 confers glutamate and aspartate specificity. PARP1 initiates the repair of DNA breaks: recognizes and binds DNA breaks within chromatin and recruits HPF1, licensing serine ADP-ribosylation of target proteins, such as histones (H2BS6ADPr and H3S10ADPr), thereby promoting decompaction of chromatin and the recruitment of repair factors leading to the reparation of DNA strand breaks. HPF1 initiates serine ADP-ribosylation but restricts the polymerase activity of PARP1 in order to limit the length of poly-ADP-ribose chains. In addition to base excision repair (BER) pathway, also involved in double-strand breaks (DSBs) repair: together with TIMELESS, accumulates at DNA damage sites and promotes homologous recombination repair by mediating poly-ADP-ribosylation. Mediates the poly-ADP-ribosylation of a number of proteins, including itself, APLF, CHFR and NFAT5. In addition to proteins, also able to ADP-ribosylate DNA: catalyzes ADP-ribosylation of DNA strand break termini containing terminal phosphates and a 2'-OH group in single- and double-stranded DNA, respectively. Required for PARP9 and DTX3L recruitment to DNA damage sites. PARP1-dependent PARP9-DTX3L-mediated ubiquitination promotes the rapid and specific recruitment of 53BP1/TP53BP1, UIMC1/RAP80, and BRCA1 to DNA damage sites. PARP1-mediated DNA repair in neurons plays a role in sleep: senses DNA damage in neurons and promotes sleep, facilitating efficient DNA repair. In addition to DNA repair, also involved in other processes, such as transcription regulation, programmed cell death, membrane repair, adipogenesis and innate immunity. Acts as a repressor of transcription: binds to nucleosomes and modulates chromatin structure in a manner similar to histone H1, thereby altering RNA polymerase II. Acts both as a positive and negative regulator of transcription elongation, depending on the context. Acts as a positive regulator of transcription elongation by mediating poly-ADP-ribosylation of NELFE, preventing RNA-binding activity of NELFE and relieving transcription pausing. Acts as a negative regulator of transcription elongation in response to DNA damage by catalyzing poly-ADP-ribosylation of CCNT1, disrupting the phase separation activity of CCNT1 and subsequent activation of CDK9. Involved in replication fork progression following interaction with CARM1: mediates poly-ADP-ribosylation at replication forks, slowing fork progression. Poly-ADP-ribose chains generated by PARP1 also play a role in poly-ADP-ribose-dependent cell death, a process named parthanatos. Also acts as a negative regulator of the cGAS-STING pathway. Acts by mediating poly-ADP-ribosylation of CGAS: PARP1 translocates into the cytosol following phosphorylation by PRKDC and catalyzes poly-ADP-ribosylation and inactivation of CGAS. Acts as a negative regulator of adipogenesis: catalyzes poly-ADP-ribosylation of histone H2B on 'Glu-35' (H2BE35ADPr) following interaction with NMNAT1, inhibiting phosphorylation of H2B at 'Ser-36' (H2BS36ph), thereby blocking expression of pro-adipogenetic genes. Involved in the synthesis of ATP in the nucleus, together with NMNAT1, PARG and NUDT5. Nuclear ATP generation is required for extensive chromatin remodeling events that are energy-consuming. In terms of biological role, promotes AIFM1-mediated apoptosis. This form, which translocates into the cytoplasm following cleavage by caspase-3 (CASP3) and caspase-7 (CASP7) in response to apoptosis, is auto-poly-ADP-ribosylated and serves as a poly-ADP-ribose carrier to induce AIFM1-mediated apoptosis. Its function is as follows. This cleavage form irreversibly binds to DNA breaks and interferes with DNA repair, promoting DNA damage-induced apoptosis. This chain is Poly [ADP-ribose] polymerase 1 (PARP1), found in Cricetulus griseus (Chinese hamster).